We begin with the raw amino-acid sequence, 1966 residues long: Alpha-protein kinase 2 (1966 aa).

6 disordered regions span residues 23–65 (NSSP…STGL), 211–231 (AMNSEQSPDQPFSIASNDTDK), 1211–1259 (LKSN…AYSD), 1303–1365 (SLPN…EGAG), 1386–1423 (KTQGKKKKKHVQHGTPKPENDAPTDVRSESRQKNVNGK), and 1437–1463 (NKPVAQPSGKTDITKKDSAQKVMSVRP). Polar residues predominate over residues 211 to 227 (AMNSEQSPDQPFSIASN). Low complexity predominate over residues 1211 to 1221 (LKSNKKSSSSD). The span at 1325–1342 (SDGKMRSKHKEKPDDKQQ) shows a compositional bias: basic and acidic residues. Positions 1388–1397 (QGKKKKKHVQ) are enriched in basic residues. Residues 1401–1417 (PKPENDAPTDVRSESRQ) are compositionally biased toward basic and acidic residues. One can recognise an Ig-like domain in the interval 1577–1659 (PRVVSEIQAD…SLIVANISVS (83 aa)). C1599 and C1649 are joined by a disulfide. One can recognise an Alpha-type protein kinase domain in the interval 1702–1934 (KEDFLSDQYF…YCELLGLVSL (233 aa)). Positions 1937-1966 (KPKRTVAPPKPKTQPVPKKKTFGPVLNAKS) are disordered.

It belongs to the protein kinase superfamily. Alpha-type protein kinase family. ALPK subfamily. As to expression, expressed in developing cardiac tissue.

Its subcellular location is the basolateral cell membrane. The catalysed reaction is L-seryl-[protein] + ATP = O-phospho-L-seryl-[protein] + ADP + H(+). It carries out the reaction L-threonyl-[protein] + ATP = O-phospho-L-threonyl-[protein] + ADP + H(+). Functionally, protein kinase that recognizes phosphorylation sites in which the surrounding peptides have an alpha-helical conformation. Regulates cardiac development and cardiomyocyte differentiation by negatively regulating Wnt/beta-catenin signaling. This is Alpha-protein kinase 2 (alpk2) from Danio rerio (Zebrafish).